Here is a 180-residue protein sequence, read N- to C-terminus: Crossover junction endodeoxyribonuclease RuvC (180 aa).

Residues aspartate 7, glutamate 66, and aspartate 138 contribute to the active site. Aspartate 7, glutamate 66, and aspartate 138 together coordinate Mg(2+).

The protein belongs to the RuvC family. In terms of assembly, homodimer which binds Holliday junction (HJ) DNA. The HJ becomes 2-fold symmetrical on binding to RuvC with unstacked arms; it has a different conformation from HJ DNA in complex with RuvA. In the full resolvosome a probable DNA-RuvA(4)-RuvB(12)-RuvC(2) complex forms which resolves the HJ. Mg(2+) is required as a cofactor.

It localises to the cytoplasm. It catalyses the reaction Endonucleolytic cleavage at a junction such as a reciprocal single-stranded crossover between two homologous DNA duplexes (Holliday junction).. The RuvA-RuvB-RuvC complex processes Holliday junction (HJ) DNA during genetic recombination and DNA repair. Endonuclease that resolves HJ intermediates. Cleaves cruciform DNA by making single-stranded nicks across the HJ at symmetrical positions within the homologous arms, yielding a 5'-phosphate and a 3'-hydroxyl group; requires a central core of homology in the junction. The consensus cleavage sequence is 5'-(A/T)TT(C/G)-3'. Cleavage occurs on the 3'-side of the TT dinucleotide at the point of strand exchange. HJ branch migration catalyzed by RuvA-RuvB allows RuvC to scan DNA until it finds its consensus sequence, where it cleaves and resolves the cruciform DNA. The chain is Crossover junction endodeoxyribonuclease RuvC from Paraburkholderia phymatum (strain DSM 17167 / CIP 108236 / LMG 21445 / STM815) (Burkholderia phymatum).